The chain runs to 496 residues: L-arabinose isomerase (496 aa).

Residues Glu302, Glu329, His346, and His445 each coordinate Mn(2+).

The protein belongs to the arabinose isomerase family. Mn(2+) is required as a cofactor.

The enzyme catalyses beta-L-arabinopyranose = L-ribulose. It functions in the pathway carbohydrate degradation; L-arabinose degradation via L-ribulose; D-xylulose 5-phosphate from L-arabinose (bacterial route): step 1/3. Its function is as follows. Catalyzes the conversion of L-arabinose to L-ribulose. The sequence is that of L-arabinose isomerase from Thermotoga sp. (strain RQ2).